The chain runs to 418 residues: Cyclin-A1 (418 aa).

The protein belongs to the cyclin family. Cyclin AB subfamily. In terms of assembly, interacts with the CDK1 and the CDK2 protein kinases to form a serine/threonine kinase holoenzyme complex. The cyclin subunit imparts substrate specificity to the complex.

The protein localises to the nucleus. Functionally, may be involved in the control of the cell cycle at the G1/S (start) and G2/M (mitosis) transitions. The protein is Cyclin-A1 (ccna1) of Xenopus laevis (African clawed frog).